A 56-amino-acid polypeptide reads, in one-letter code: Large ribosomal subunit protein bL32 (56 aa).

Residues 1-20 show a composition bias toward basic residues; sequence MAVPKRRTSRSNTRSRRSQW. The tract at residues 1 to 24 is disordered; the sequence is MAVPKRRTSRSNTRSRRSQWKAKV.

It belongs to the bacterial ribosomal protein bL32 family.

This chain is Large ribosomal subunit protein bL32, found in Frankia casuarinae (strain DSM 45818 / CECT 9043 / HFP020203 / CcI3).